Reading from the N-terminus, the 156-residue chain is Endogenous retrovirus group K member 113 Pro protein (156 aa).

The region spanning 21–96 is the Peptidase A2 domain; sequence FEGLVDTGAD…IPLNLWGRDL (76 aa). Asp26 is a catalytic residue. Residues 111–156 enclose the G-patch domain; the sequence is YSPTSQKIMTKMGYIPGKGLGKNEDGIKIPVEAKINQKREGIGYPF.

Belongs to the peptidase A2 family. HERV class-II K(HML-2) subfamily. As to quaternary structure, active as a homodimer. Autoproteolytically processed at the N-terminus. Expected C-terminal autoprocessing not detected. The sequence shown is that of the processed Pro protein.

The enzyme catalyses Processing at the authentic HIV-1 PR recognition site and release of the mature p17 matrix and the p24 capsid protein, as a result of the cleavage of the -SQNY-|-PIVQ- cleavage site.. Its function is as follows. Retroviral proteases have roles in the processing of the primary translation products and the maturation of the viral particle. Endogenous Pro proteins may have kept, lost or modified their original function during evolution. This chain is Endogenous retrovirus group K member 113 Pro protein (HERVK_113), found in Homo sapiens (Human).